A 142-amino-acid polypeptide reads, in one-letter code: Small ribosomal subunit protein uS12 (142 aa).

Positions 1 to 44 are disordered; sequence MANGKYAARKLKQDRQQRRWSDSEYARRERGLGAKSDPLEGAPQ. Residues 11-32 are compositionally biased toward basic and acidic residues; it reads LKQDRQQRRWSDSEYARRERGL.

The protein belongs to the universal ribosomal protein uS12 family. Part of the 30S ribosomal subunit.

In terms of biological role, with S4 and S5 plays an important role in translational accuracy. Located at the interface of the 30S and 50S subunits. This is Small ribosomal subunit protein uS12 from Haloquadratum walsbyi (strain DSM 16790 / HBSQ001).